The primary structure comprises 340 residues: Phosphate acyltransferase (340 aa).

It belongs to the PlsX family. As to quaternary structure, homodimer. Probably interacts with PlsY.

It localises to the cytoplasm. It catalyses the reaction a fatty acyl-[ACP] + phosphate = an acyl phosphate + holo-[ACP]. The protein operates within lipid metabolism; phospholipid metabolism. In terms of biological role, catalyzes the reversible formation of acyl-phosphate (acyl-PO(4)) from acyl-[acyl-carrier-protein] (acyl-ACP). This enzyme utilizes acyl-ACP as fatty acyl donor, but not acyl-CoA. The polypeptide is Phosphate acyltransferase (Pseudomonas savastanoi pv. phaseolicola (strain 1448A / Race 6) (Pseudomonas syringae pv. phaseolicola (strain 1448A / Race 6))).